A 55-amino-acid chain; its full sequence is Male-specific sperm protein Mst84Dc (55 aa).

The protein belongs to the MST(3)CGP family. As to expression, testis.

This is Male-specific sperm protein Mst84Dc (Mst84Dc) from Drosophila melanogaster (Fruit fly).